Consider the following 383-residue polypeptide: Protein COS5 (383 aa).

Topologically, residues 1 to 42 (MKENELKNEKSVDVLSFKQLESQKIVLPQDLFRSSFTWFCYE) are cytoplasmic. A helical transmembrane segment spans residues 43–63 (IYKSLAFPIWMLLWLPLSVWW). At 64 to 72 (KLSNNCIYP) the chain is on the extracellular side. Residues 73 to 93 (LIVSLLVLFLGPIFVLVICGL) form a helical membrane-spanning segment. Over 94-232 (SRKRSLSKQL…RSKLTWFLKR (139 aa)) the chain is Cytoplasmic. The chain crosses the membrane as a helical span at residues 233–253 (IFTIYSLPLWLAFLNCICVSQ). Position 254 (histidine 254) is a topological domain, extracellular. The chain crosses the membrane as a helical span at residues 255–275 (FCLAFRILCPGLFFLMMVWLF). Topologically, residues 276-383 (QNMRTTALLV…SRNEESLMKK (108 aa)) are cytoplasmic.

This sequence belongs to the DUP/COS family.

The protein resides in the membrane. The chain is Protein COS5 (COS5) from Saccharomyces cerevisiae (strain ATCC 204508 / S288c) (Baker's yeast).